Consider the following 520-residue polypeptide: Retinoic acid receptor RXR-beta (520 aa).

A disordered region spans residues 1 to 167 (MSWATRPPFL…GGSGPPEDVK (167 aa)). Positions 1-191 (MSWATRPPFL…PGGPGAGKRL (191 aa)) are modulating. Arg25 is modified (omega-N-methylarginine). Residues 64 to 79 (EAGRDGMGDSGRDSRS) show a composition bias toward basic and acidic residues. Over residues 95-118 (SSPPGPPLTPSAPPPPMPPPPLGS) the composition is skewed to pro residues. The segment covering 119 to 130 (PFPVISSSMGSP) has biased composition (low complexity). The span at 131–140 (GLPPPAPPGF) shows a compositional bias: pro residues. 2 NR C4-type zinc fingers span residues 192–212 (CAICGDRSSGKHYGVYSCEGC) and 228–252 (CRDNKDCTVDKRQRNRCQYCRYQKC). The segment at residues 192-257 (CAICGDRSSG…RYQKCLATGM (66 aa)) is a DNA-binding region (nuclear receptor). The tract at residues 258–382 (KREAVQEERQ…HRSIDVRDGI (125 aa)) is hinge. The span at 263 to 275 (QEERQRGKDKDGD) shows a compositional bias: basic and acidic residues. Disordered stretches follow at residues 263-285 (QEERQRGKDKDGDGDGAGGAPEE) and 300-323 (QKSDQGVEGPGATGGGGSSPNDPV). The 234-residue stretch at 283–516 (PEEMPVDRIL…TFLMEMLEAP (234 aa)) folds into the NR LBD domain. Residues 307–317 (EGPGATGGGGS) are compositionally biased toward gly residues.

The protein belongs to the nuclear hormone receptor family. NR2 subfamily. Homodimer (in vitro). Heterodimer with other retinoic acid receptor family members. Binds DNA preferentially as a RAR/RXR heterodimer. Interacts with NR1H3. Interacts with AKAP13. In terms of tissue distribution, in all tissues tested, including brain, thymus, spleen and liver.

It is found in the nucleus. The protein resides in the cytoplasm. Functionally, receptor for retinoic acid. Retinoic acid receptors bind as heterodimers to their target response elements in response to their ligands, all-trans or 9-cis retinoic acid, and regulate gene expression in various biological processes. The RAR/RXR heterodimers bind to the retinoic acid response elements (RARE). The polypeptide is Retinoic acid receptor RXR-beta (Rxrb) (Mus musculus (Mouse)).